Here is a 538-residue protein sequence, read N- to C-terminus: Putative cysteine ligase BshC (538 aa).

Residues 460–484 (KINEQIELLERMLKRNVEKKHEVEL) are a coiled coil.

The protein belongs to the BshC family.

Functionally, involved in bacillithiol (BSH) biosynthesis. May catalyze the last step of the pathway, the addition of cysteine to glucosamine malate (GlcN-Mal) to generate BSH. The chain is Putative cysteine ligase BshC from Bacillus cereus (strain AH187).